A 406-amino-acid polypeptide reads, in one-letter code: Phosphopentomutase (406 aa).

6 residues coordinate Mn(2+): Asp-10, Asp-305, His-310, Asp-346, His-347, and His-358.

Belongs to the phosphopentomutase family. Mn(2+) is required as a cofactor.

It localises to the cytoplasm. It catalyses the reaction 2-deoxy-alpha-D-ribose 1-phosphate = 2-deoxy-D-ribose 5-phosphate. The catalysed reaction is alpha-D-ribose 1-phosphate = D-ribose 5-phosphate. The protein operates within carbohydrate degradation; 2-deoxy-D-ribose 1-phosphate degradation; D-glyceraldehyde 3-phosphate and acetaldehyde from 2-deoxy-alpha-D-ribose 1-phosphate: step 1/2. Isomerase that catalyzes the conversion of deoxy-ribose 1-phosphate (dRib-1-P) and ribose 1-phosphate (Rib-1-P) to deoxy-ribose 5-phosphate (dRib-5-P) and ribose 5-phosphate (Rib-5-P), respectively. The chain is Phosphopentomutase from Aliivibrio salmonicida (strain LFI1238) (Vibrio salmonicida (strain LFI1238)).